A 288-amino-acid polypeptide reads, in one-letter code: Inorganic pyrophosphatase (288 aa).

Diphosphate is bound at residue Arg-80. The Mg(2+) site is built by Asp-117, Asp-122, and Asp-154. The tract at residues 252–271 is disordered; sequence TPSYSDAAAQEIPSASPAPA. Low complexity predominate over residues 258-271; it reads AAAQEIPSASPAPA.

It belongs to the PPase family. Mg(2+) is required as a cofactor.

It is found in the cytoplasm. The enzyme catalyses diphosphate + H2O = 2 phosphate + H(+). The sequence is that of Inorganic pyrophosphatase (IPP1) from Candida albicans (strain SC5314 / ATCC MYA-2876) (Yeast).